Consider the following 353-residue polypeptide: 4-hydroxy-3-methylbut-2-en-1-yl diphosphate synthase (flavodoxin) (353 aa).

Positions 265, 268, 300, and 307 each coordinate [4Fe-4S] cluster.

The protein belongs to the IspG family. [4Fe-4S] cluster serves as cofactor.

The enzyme catalyses (2E)-4-hydroxy-3-methylbut-2-enyl diphosphate + oxidized [flavodoxin] + H2O + 2 H(+) = 2-C-methyl-D-erythritol 2,4-cyclic diphosphate + reduced [flavodoxin]. Its pathway is isoprenoid biosynthesis; isopentenyl diphosphate biosynthesis via DXP pathway; isopentenyl diphosphate from 1-deoxy-D-xylulose 5-phosphate: step 5/6. Converts 2C-methyl-D-erythritol 2,4-cyclodiphosphate (ME-2,4cPP) into 1-hydroxy-2-methyl-2-(E)-butenyl 4-diphosphate. This is 4-hydroxy-3-methylbut-2-en-1-yl diphosphate synthase (flavodoxin) from Sulfurihydrogenibium sp. (strain YO3AOP1).